Reading from the N-terminus, the 556-residue chain is Formate--tetrahydrofolate ligase (556 aa).

An ATP-binding site is contributed by 65–72 (TPAGEGKT).

Belongs to the formate--tetrahydrofolate ligase family.

It carries out the reaction (6S)-5,6,7,8-tetrahydrofolate + formate + ATP = (6R)-10-formyltetrahydrofolate + ADP + phosphate. It functions in the pathway one-carbon metabolism; tetrahydrofolate interconversion. The polypeptide is Formate--tetrahydrofolate ligase (Carboxydothermus hydrogenoformans (strain ATCC BAA-161 / DSM 6008 / Z-2901)).